A 348-amino-acid chain; its full sequence is Protein RecA (348 aa).

64–71 serves as a coordination point for ATP; it reads GPESSGKT. Residues 324–335 are compositionally biased toward basic and acidic residues; sequence EYEIDGSNKEPL. The disordered stretch occupies residues 324–348; the sequence is EYEIDGSNKEPLAETEETLSLLDDE. The segment covering 336-348 has biased composition (acidic residues); sequence AETEETLSLLDDE.

Belongs to the RecA family.

Its subcellular location is the cytoplasm. Functionally, can catalyze the hydrolysis of ATP in the presence of single-stranded DNA, the ATP-dependent uptake of single-stranded DNA by duplex DNA, and the ATP-dependent hybridization of homologous single-stranded DNAs. It interacts with LexA causing its activation and leading to its autocatalytic cleavage. In Listeria ivanovii, this protein is Protein RecA.